A 146-amino-acid polypeptide reads, in one-letter code: Large ribosomal subunit protein uL15 (146 aa).

Residues 1 to 54 (MKLHELQPAAGSRKAPKRVGRGTGSGLGRNAGKGEKGQNARSGGGVRPGFEGGQ) form a disordered region. Gly residues-rich tracts occupy residues 21 to 31 (RGTGSGLGRNA) and 42 to 52 (SGGGVRPGFEG).

It belongs to the universal ribosomal protein uL15 family. In terms of assembly, part of the 50S ribosomal subunit.

Binds to the 23S rRNA. The polypeptide is Large ribosomal subunit protein uL15 (Clostridium botulinum (strain Alaska E43 / Type E3)).